Reading from the N-terminus, the 395-residue chain is Succinyl-diaminopimelate desuccinylase (395 aa).

Position 74 (His74) interacts with Zn(2+). Asp76 is a catalytic residue. Asp107 contacts Zn(2+). Catalysis depends on Glu141, which acts as the Proton acceptor. Zn(2+)-binding residues include Glu142, Glu170, and His368.

Belongs to the peptidase M20A family. DapE subfamily. Homodimer. Zn(2+) serves as cofactor. It depends on Co(2+) as a cofactor.

It catalyses the reaction N-succinyl-(2S,6S)-2,6-diaminopimelate + H2O = (2S,6S)-2,6-diaminopimelate + succinate. It functions in the pathway amino-acid biosynthesis; L-lysine biosynthesis via DAP pathway; LL-2,6-diaminopimelate from (S)-tetrahydrodipicolinate (succinylase route): step 3/3. In terms of biological role, catalyzes the hydrolysis of N-succinyl-L,L-diaminopimelic acid (SDAP), forming succinate and LL-2,6-diaminopimelate (DAP), an intermediate involved in the bacterial biosynthesis of lysine and meso-diaminopimelic acid, an essential component of bacterial cell walls. This chain is Succinyl-diaminopimelate desuccinylase, found in Chelativorans sp. (strain BNC1).